The sequence spans 70 residues: Mu-conotoxin PnIVB (70 aa).

Positions 1 to 20 are cleaved as a signal peptide; sequence MMSKLGVLLIICLLLCPLTA. Positions 21-51 are excised as a propeptide; sequence VPQDGDQPADQPAERMQDDISSEHHPFFDPV.

In terms of processing, contains 3 disulfide bonds. They are not added, since framework IV presents two different connectivities (I-V, II-III, IV-VI and I-III, II-V, IV-VI). As to expression, expressed by the venom duct.

It localises to the secreted. Functionally, mu-conotoxins block voltage-gated sodium channels (Nav). Blocks reversibly sodium channels in molluskan neurons, but has no effect on sodium currents in bovine chromaffin cells or in rat brain synaptosomes. Induces paralysis in bivalve mollusks (Mytilus). No effect are observed on fish (Gambusia) and fly larvae (Sarcophaga). Is approximately 6 times more potent than PnIVA in blockade of the sodium current in Lymnaea neurons. In Conus pennaceus (Feathered cone), this protein is Mu-conotoxin PnIVB.